The following is a 273-amino-acid chain: Ribosomal RNA small subunit methyltransferase A (273 aa).

6 residues coordinate S-adenosyl-L-methionine: N18, L20, G45, E66, D91, and N113.

The protein belongs to the class I-like SAM-binding methyltransferase superfamily. rRNA adenine N(6)-methyltransferase family. RsmA subfamily.

The protein resides in the cytoplasm. The enzyme catalyses adenosine(1518)/adenosine(1519) in 16S rRNA + 4 S-adenosyl-L-methionine = N(6)-dimethyladenosine(1518)/N(6)-dimethyladenosine(1519) in 16S rRNA + 4 S-adenosyl-L-homocysteine + 4 H(+). Specifically dimethylates two adjacent adenosines (A1518 and A1519) in the loop of a conserved hairpin near the 3'-end of 16S rRNA in the 30S particle. May play a critical role in biogenesis of 30S subunits. In Shigella flexneri, this protein is Ribosomal RNA small subunit methyltransferase A.